Here is a 94-residue protein sequence, read N- to C-terminus: uncharacterized protein (94 aa).

It belongs to the phD/YefM antitoxin family.

This is an uncharacterized protein from Synechocystis sp. (strain ATCC 27184 / PCC 6803 / Kazusa).